Here is a 262-residue protein sequence, read N- to C-terminus: 2-keto-4-pentenoate hydratase 2 (262 aa).

Belongs to the hydratase/decarboxylase family. MhpD subfamily. The cofactor is a divalent metal cation.

It carries out the reaction (S)-4-hydroxy-2-oxopentanoate = (2Z)-2-hydroxypenta-2,4-dienoate + H2O. It functions in the pathway aromatic compound metabolism; 3-phenylpropanoate degradation. Its function is as follows. Catalyzes the conversion of 2-hydroxypentadienoic acid (enolic form of 2-oxopent-4-enoate) to 4-hydroxy-2-ketopentanoic acid. The polypeptide is 2-keto-4-pentenoate hydratase 2 (Dechloromonas aromatica (strain RCB)).